The primary structure comprises 27 residues: Cysteine-rich venom protein tropirin (27 aa).

It belongs to the CRISP family. Contains 8 disulfide bonds. Expressed by the venom gland.

The protein localises to the secreted. Blocks contraction of smooth muscle elicited by high potassium-induced depolarization, but does not block caffeine-stimulated contraction. May target voltage-gated calcium channels on smooth muscle. The chain is Cysteine-rich venom protein tropirin from Tropidechis carinatus (Australian rough-scaled snake).